The sequence spans 228 residues: Ribosomal RNA small subunit methyltransferase G (228 aa).

Residues glycine 70, 121–122 (AE), and arginine 138 contribute to the S-adenosyl-L-methionine site.

The protein belongs to the methyltransferase superfamily. RNA methyltransferase RsmG family.

Its subcellular location is the cytoplasm. Specifically methylates the N7 position of a guanine in 16S rRNA. The polypeptide is Ribosomal RNA small subunit methyltransferase G (Thermotoga sp. (strain RQ2)).